A 609-amino-acid chain; its full sequence is Autophagy-related protein 22-1 (609 aa).

The next 4 helical transmembrane spans lie at 95–115 (YYAG…GVEI), 117–137 (TASF…ILII), 151–171 (LLLV…LGVV), and 176–196 (MVGA…FVLL). Residues 214-238 (AREPPPALDGSRAQEGHSDTTNDID) form a disordered region. Residues 225-238 (RAQEGHSDTTNDID) show a composition bias toward basic and acidic residues. Residue Asn244 is glycosylated (N-linked (GlcNAc...) asparagine). A helical membrane pass occupies residues 287 to 307 (IGIGYIGAIILQIVCILVVIA). A glycan (N-linked (GlcNAc...) asparagine) is linked at Asn309. 3 helical membrane-spanning segments follow: residues 317–337 (LVLF…ALWL), 381–401 (ILLF…VSGT), and 415–435 (AALG…AFSW). Asn443 carries an N-linked (GlcNAc...) asparagine glycan. 4 helical membrane passes run 450-470 (IIAC…GFIP), 487-509 (FPLG…SFFG), 522-542 (ALYA…VGII), and 552-572 (AFVF…LVDV).

This sequence belongs to the ATG22 family.

Its subcellular location is the vacuole membrane. Its function is as follows. Vacuolar effluxer which mediate the efflux of amino acids resulting from autophagic degradation. The release of autophagic amino acids allows the maintenance of protein synthesis and viability during nitrogen starvation. The sequence is that of Autophagy-related protein 22-1 (atg22-1) from Neosartorya fischeri (strain ATCC 1020 / DSM 3700 / CBS 544.65 / FGSC A1164 / JCM 1740 / NRRL 181 / WB 181) (Aspergillus fischerianus).